Reading from the N-terminus, the 313-residue chain is Aspartoacylase (313 aa).

Residues His21 and Glu24 each coordinate Zn(2+). N-acetyl-L-aspartate-binding residues include Arg63, Asn70, and Arg71. His116 provides a ligand contact to Zn(2+). Tyr164 and Arg168 together coordinate N-acetyl-L-aspartate. The active-site Proton donor/acceptor is Glu178. Tyr288 lines the N-acetyl-L-aspartate pocket.

The protein belongs to the AspA/AstE family. Aspartoacylase subfamily. As to quaternary structure, homodimer. It depends on Zn(2+) as a cofactor.

The protein resides in the cytoplasm. It localises to the nucleus. The catalysed reaction is an N-acyl-L-aspartate + H2O = a carboxylate + L-aspartate. It catalyses the reaction N-acetyl-L-aspartate + H2O = L-aspartate + acetate. Catalyzes the deacetylation of N-acetylaspartic acid (NAA) to produce acetate and L-aspartate. NAA occurs in high concentration in brain and its hydrolysis NAA plays a significant part in the maintenance of intact white matter. In other tissues it acts as a scavenger of NAA from body fluids. This chain is Aspartoacylase, found in Pongo abelii (Sumatran orangutan).